A 391-amino-acid chain; its full sequence is Formate-dependent phosphoribosylglycinamide formyltransferase (391 aa).

N(1)-(5-phospho-beta-D-ribosyl)glycinamide-binding positions include E20–L21 and E80. Residues R112, K153, S158–Q163, E193–I196, and E201 contribute to the ATP site. Residues R117–L306 enclose the ATP-grasp domain. 2 residues coordinate Mg(2+): E265 and E277. Residues D284, K354, and R361–R362 contribute to the N(1)-(5-phospho-beta-D-ribosyl)glycinamide site.

This sequence belongs to the PurK/PurT family. Homodimer.

It catalyses the reaction N(1)-(5-phospho-beta-D-ribosyl)glycinamide + formate + ATP = N(2)-formyl-N(1)-(5-phospho-beta-D-ribosyl)glycinamide + ADP + phosphate + H(+). The protein operates within purine metabolism; IMP biosynthesis via de novo pathway; N(2)-formyl-N(1)-(5-phospho-D-ribosyl)glycinamide from N(1)-(5-phospho-D-ribosyl)glycinamide (formate route): step 1/1. Its function is as follows. Involved in the de novo purine biosynthesis. Catalyzes the transfer of formate to 5-phospho-ribosyl-glycinamide (GAR), producing 5-phospho-ribosyl-N-formylglycinamide (FGAR). Formate is provided by PurU via hydrolysis of 10-formyl-tetrahydrofolate. This chain is Formate-dependent phosphoribosylglycinamide formyltransferase, found in Shewanella sp. (strain ANA-3).